The sequence spans 266 residues: UPF0354 protein lwe1624 (266 aa).

It belongs to the UPF0354 family.

This chain is UPF0354 protein lwe1624, found in Listeria welshimeri serovar 6b (strain ATCC 35897 / DSM 20650 / CCUG 15529 / CIP 8149 / NCTC 11857 / SLCC 5334 / V8).